A 129-amino-acid chain; its full sequence is Small ribosomal subunit protein uS11 (129 aa).

This sequence belongs to the universal ribosomal protein uS11 family. Part of the 30S ribosomal subunit. Interacts with proteins S7 and S18. Binds to IF-3.

Located on the platform of the 30S subunit, it bridges several disparate RNA helices of the 16S rRNA. Forms part of the Shine-Dalgarno cleft in the 70S ribosome. This chain is Small ribosomal subunit protein uS11, found in Thermosipho africanus (strain TCF52B).